The primary structure comprises 415 residues: NPL4-like protein (415 aa).

The region spanning 130–279 (AASFDRDSAN…FEAFQMSEIC (150 aa)) is the MPN domain.

It belongs to the NPL4 family.

It localises to the endoplasmic reticulum. It participates in protein degradation; proteasomal ubiquitin-dependent pathway. May be part of a complex that binds ubiquitinated proteins and that is necessary for the export of misfolded proteins from the ER to the cytoplasm, where they are degraded by the proteasome. The sequence is that of NPL4-like protein from Oryza sativa subsp. japonica (Rice).